Reading from the N-terminus, the 511-residue chain is Maturase K (511 aa).

The protein belongs to the intron maturase 2 family. MatK subfamily.

Its subcellular location is the plastid. The protein resides in the chloroplast. In terms of biological role, usually encoded in the trnK tRNA gene intron. Probably assists in splicing its own and other chloroplast group II introns. The protein is Maturase K of Brachypodium sylvaticum (False brome).